The sequence spans 184 residues: Shikimate kinase (184 aa).

ATP is bound at residue 20-25 (GVGKSR). Residue Ser24 participates in Mg(2+) binding. Residues Asp42, Arg66, and Gly88 each coordinate substrate. ATP is bound at residue Arg127. Arg146 is a substrate binding site. ATP is bound at residue Arg162.

The protein belongs to the shikimate kinase family. Monomer. Requires Mg(2+) as cofactor.

It is found in the cytoplasm. The enzyme catalyses shikimate + ATP = 3-phosphoshikimate + ADP + H(+). Its pathway is metabolic intermediate biosynthesis; chorismate biosynthesis; chorismate from D-erythrose 4-phosphate and phosphoenolpyruvate: step 5/7. Functionally, catalyzes the specific phosphorylation of the 3-hydroxyl group of shikimic acid using ATP as a cosubstrate. The polypeptide is Shikimate kinase (Thermus thermophilus (strain ATCC 27634 / DSM 579 / HB8)).